A 353-amino-acid chain; its full sequence is UPF0283 membrane protein YcjF (353 aa).

A compositionally biased stretch (basic and acidic residues) spans 1–19; that stretch reads MSEPLKPRIDFAEPLKEEP. Residues 1–35 form a disordered region; sequence MSEPLKPRIDFAEPLKEEPTSAFKAQQTFSEAESR. Transmembrane regions (helical) follow at residues 70–90, 100–120, and 213–233; these read MVMGGLALFGASVVGQGVQWT, VALGGCAAGALIIGAGVGSVV, and ESTLMIAVSSLALVDMAFIAW.

Belongs to the UPF0283 family.

The protein localises to the cell inner membrane. The chain is UPF0283 membrane protein YcjF from Salmonella enteritidis PT4 (strain P125109).